The primary structure comprises 145 residues: Large ribosomal subunit protein uL16 (145 aa).

It belongs to the universal ribosomal protein uL16 family. As to quaternary structure, part of the 50S ribosomal subunit.

In terms of biological role, binds 23S rRNA and is also seen to make contacts with the A and possibly P site tRNAs. This Lachnospira eligens (strain ATCC 27750 / DSM 3376 / VPI C15-48 / C15-B4) (Eubacterium eligens) protein is Large ribosomal subunit protein uL16.